The sequence spans 168 residues: Ribosome maturation factor RimM (168 aa).

The 72-residue stretch at 97–168 (PNEYYYYELL…RLVVKVPEWI (72 aa)) folds into the PRC barrel domain.

It belongs to the RimM family. As to quaternary structure, binds ribosomal protein uS19.

It is found in the cytoplasm. In terms of biological role, an accessory protein needed during the final step in the assembly of 30S ribosomal subunit, possibly for assembly of the head region. Essential for efficient processing of 16S rRNA. May be needed both before and after RbfA during the maturation of 16S rRNA. It has affinity for free ribosomal 30S subunits but not for 70S ribosomes. The polypeptide is Ribosome maturation factor RimM (Pseudothermotoga lettingae (strain ATCC BAA-301 / DSM 14385 / NBRC 107922 / TMO) (Thermotoga lettingae)).